We begin with the raw amino-acid sequence, 150 residues long: 6,7-dimethyl-8-ribityllumazine synthase (150 aa).

Residues Phe11, 43–45, and 67–69 contribute to the 5-amino-6-(D-ribitylamino)uracil site; these read VFD and AVI. 72–73 lines the (2S)-2-hydroxy-3-oxobutyl phosphate pocket; it reads AT. Residue His75 is the Proton donor of the active site. Residue Leu100 participates in 5-amino-6-(D-ribitylamino)uracil binding. Arg115 serves as a coordination point for (2S)-2-hydroxy-3-oxobutyl phosphate.

It belongs to the DMRL synthase family.

It carries out the reaction (2S)-2-hydroxy-3-oxobutyl phosphate + 5-amino-6-(D-ribitylamino)uracil = 6,7-dimethyl-8-(1-D-ribityl)lumazine + phosphate + 2 H2O + H(+). It functions in the pathway cofactor biosynthesis; riboflavin biosynthesis; riboflavin from 2-hydroxy-3-oxobutyl phosphate and 5-amino-6-(D-ribitylamino)uracil: step 1/2. Catalyzes the formation of 6,7-dimethyl-8-ribityllumazine by condensation of 5-amino-6-(D-ribitylamino)uracil with 3,4-dihydroxy-2-butanone 4-phosphate. This is the penultimate step in the biosynthesis of riboflavin. The sequence is that of 6,7-dimethyl-8-ribityllumazine synthase from Pyrobaculum calidifontis (strain DSM 21063 / JCM 11548 / VA1).